An 805-amino-acid chain; its full sequence is Ubiquitin carboxyl-terminal hydrolase 10 (805 aa).

Positions 139–170 (DGSGNADSDGTSGTGQRERKKKKKRPPGYYSY) are disordered. Residues 143 to 153 (NADSDGTSGTG) show a composition bias toward polar residues. Residues 422–802 (RGLINKGNWC…TAYLLYYRRV (381 aa)) form the USP domain. Cysteine 431 serves as the catalytic Nucleophile. The segment at 561–593 (HINNGPDPVSEKEEINKDEQEGSDEEWEQVGPR) is disordered. Residues 569 to 580 (VSEKEEINKDEQ) show a composition bias toward basic and acidic residues. The Proton acceptor role is filled by histidine 756.

This sequence belongs to the peptidase C19 family. USP10 subfamily.

The protein localises to the cytoplasm. It localises to the nucleus. It catalyses the reaction Thiol-dependent hydrolysis of ester, thioester, amide, peptide and isopeptide bonds formed by the C-terminal Gly of ubiquitin (a 76-residue protein attached to proteins as an intracellular targeting signal).. Functionally, hydrolase that can remove conjugated ubiquitin from target proteins such as p53/tp53, rps2/us5, rps3/us3, rps10/eS10, becn1, snx3 and cftr. Acts as an essential regulator of p53/tp53 stability: in unstressed cells, specifically deubiquitinates p53/tp53 in the cytoplasm, leading to counteracts MDM2 action and stabilize p53/tp53. Following DNA damage, translocates to the nucleus and deubiquitinates p53/tp53, leading to regulate the p53/TP53-dependent DNA damage response. Component of a regulatory loop that controls autophagy and p53/tp53 levels. Plays a key role in 40S ribosome subunit recycling when a ribosome has stalled during translation: acts both by inhibiting formation of stress granules, which store stalled translation pre-initiation complexes, and mediating deubiquitination of 40S ribosome subunits. Deubiquitinates cftr in early endosomes, enhancing its endocytic recycling. In Xenopus tropicalis (Western clawed frog), this protein is Ubiquitin carboxyl-terminal hydrolase 10 (usp10).